Reading from the N-terminus, the 106-residue chain is Testis-specific basic protein Y 2 (106 aa).

It belongs to the VCX/VCY family. In terms of assembly, interacts with MAP1S. Interacts with UBE3A (via HECT domain). In terms of tissue distribution, expressed exclusively in testis. Expressed in ejaculated spermatozoa of germ cell. Expressed in the nuclei of spermatogonia, spermatocytes, and round spermatids, except elongated spermatids (at protein level).

The polypeptide is Testis-specific basic protein Y 2 (BPY2) (Homo sapiens (Human)).